The chain runs to 250 residues: Protein lin-28 homolog B (250 aa).

2 disordered regions span residues 1–27 (MAEAGASKGGEEPGRLPEHEEEEESPL) and 98–126 (RVTGPGGSPCLGSERRPKGKTVQKRKPKG). Basic and acidic residues predominate over residues 9–18 (GGEEPGRLPE). The CSD domain occupies 29 to 102 (HGAGHCKWFN…GLESIRVTGP (74 aa)). Residues 114–125 (PKGKTVQKRKPK) are compositionally biased toward basic residues. 2 consecutive CCHC-type zinc fingers follow at residues 127–144 (DRCYNCGGLDHHAKECSL) and 149–166 (KKCHYCQSIMHMVANCPH). Zn(2+)-binding residues include Cys129, Cys132, His137, Cys142, Cys151, Cys154, His159, and Cys164. The segment at 165-250 (PHKTVSQQPT…GPSVQKRKKT (86 aa)) is disordered. Over residues 168 to 177 (TVSQQPTSSQ) the composition is skewed to polar residues. The span at 200-209 (GYSSPSYSQE) shows a compositional bias: low complexity. The span at 210–219 (GRSEISERSG) shows a compositional bias: basic and acidic residues.

It belongs to the lin-28 family.

Its subcellular location is the nucleus. The protein resides in the nucleolus. In terms of biological role, suppressor of specific microRNA (miRNA) biogenesis. Binds target primary miRNA transcripts and sequester them in the nucleolus, away from the microprocessor complex, hence preventing their processing into mature miRNA. The specific interaction with target pri-miRNAs occurs via an 5'-GGAG-3' motif in the pre-miRNA terminal loop. This chain is Protein lin-28 homolog B (LIN28B), found in Gallus gallus (Chicken).